Consider the following 403-residue polypeptide: S-adenosylmethionine synthase (403 aa).

Residue histidine 17 participates in ATP binding. Aspartate 19 provides a ligand contact to Mg(2+). K(+) is bound at residue glutamate 45. The L-methionine site is built by glutamate 58 and glutamine 104. The interval 104-114 (QSPDIAQGVDT) is flexible loop. ATP is bound by residues 179-181 (DGK), 250-251 (KF), aspartate 259, 265-266 (RK), alanine 282, and lysine 286. Aspartate 259 contributes to the L-methionine binding site. Lysine 290 contributes to the L-methionine binding site.

The protein belongs to the AdoMet synthase family. In terms of assembly, homotetramer; dimer of dimers. Mg(2+) is required as a cofactor. It depends on K(+) as a cofactor.

Its subcellular location is the cytoplasm. The catalysed reaction is L-methionine + ATP + H2O = S-adenosyl-L-methionine + phosphate + diphosphate. Its pathway is amino-acid biosynthesis; S-adenosyl-L-methionine biosynthesis; S-adenosyl-L-methionine from L-methionine: step 1/1. In terms of biological role, catalyzes the formation of S-adenosylmethionine (AdoMet) from methionine and ATP. The overall synthetic reaction is composed of two sequential steps, AdoMet formation and the subsequent tripolyphosphate hydrolysis which occurs prior to release of AdoMet from the enzyme. The polypeptide is S-adenosylmethionine synthase (Mycobacterium bovis (strain BCG / Pasteur 1173P2)).